A 1088-amino-acid polypeptide reads, in one-letter code: Pathogenesis-related homeodomain protein (1088 aa).

8 repeat units span residues 140-152 (INMG…PEEV), 173-199 (NSYQ…RSDD), 205-239 (GLVE…KVQT), 240-274 (GLEQ…KVQN), 283-295 (INME…PEQV), 316-342 (NSDQ…QSDD), 348-382 (GFKE…KVQT), and 383-417 (GLEQ…KVQD). The tract at residues 140-295 (INMGQKETMP…EQKETIPEQV (156 aa)) is 2 X 13 AA repeats. The segment at 173–342 (NSYQSGLPPE…HAQFGHQSDD (170 aa)) is 2 X 27 AA approximate repeats. A 2 X 35 AA approximate tandem repeats (type C) region spans residues 205–274 (GLVELVIGQK…SRGRPRKVQN (70 aa)). The segment at 220–282 (PSQLVETGKR…QNSPTSFLEN (63 aa)) is disordered. 2 consecutive DNA-binding regions (a.T hook) follow at residues 226–236 (TGKRGRGRPRK) and 261–271 (TGKRSRGRPRK). A compositionally biased stretch (polar residues) spans 272-282 (VQNSPTSFLEN). A compositionally biased stretch (polar residues) spans 303 to 320 (SLTIPTDNQSRTYNSDQS). Disordered stretches follow at residues 303-343 (SLTI…SDDT) and 363-484 (PSQL…RMEE). Positions 348 to 417 (GFKELVIGQE…SRGRPRKVQD (70 aa)) are 2 X 35 AA approximate tandem repeats (type C). 2 consecutive DNA-binding regions (a.T hook) follow at residues 369-379 (AGKRGRGRPRK) and 404-414 (TGKRSRGRPRK). The segment at 578-635 (DIFCAKCGSKDVTLSNDIILCDGACDRGFHQFCLDPPLLKEYIPPDDEGWLCPGCECK) adopts a PHD-type zinc-finger fold. Disordered regions lie at residues 667-810 (AASG…PLYP) and 851-901 (EEYG…ARES). One copy of the 4-1 repeat lies at 678-693 (GLPSDDSEDDDYDPGG). Positions 678–744 (GLPSDDSEDD…SEDDEYDPSG (67 aa)) are 2 X 16 AA Asp/Glu-rich (acidic) repeats. The span at 705–718 (SSTDESDYQSESDD) shows a compositional bias: acidic residues. Residues 729–744 (GLPSDDSEDDEYDPSG) form a 4-2 repeat. Basic and acidic residues-rich tracts occupy residues 788-802 (DHVR…HPEQ) and 874-901 (NNSD…ARES). The segment at residues 935–994 (KSTSKTLHGEHATQRLLQSFKENQYPQRAVKESLAAELALSVRQVSNWFNNRRWSFRHSS) is a DNA-binding region (homeobox).

This sequence belongs to the PHD-associated homeobox family.

The protein resides in the nucleus. Specifically binds to the fungal elicitor-responsive DNA element, 5'-CTAATTGTTTA-3', of the gene PR2 promoter. The sequence is that of Pathogenesis-related homeodomain protein (PRH) from Petroselinum crispum (Parsley).